A 299-amino-acid polypeptide reads, in one-letter code: MATELDKIFLILAIAEFIISMLGNVFIGLVNCSEGIKNQKVFSSDFILTSLAISTIGQLLVILFDSFLVGLASHLYTTYRLGKPVIMLWHMTNHLTTWLATCLSVFYFFKIAHFPHSLFLWLRWRMNGMIAMLLILSLFLLIFDSSVLEIFIDISLNIIDKSSLTLYLDESKTLYDKLSILKTLLSLTSFIPFSLSLTSVLFLYLSLVRHTRNLKLSSLGSRDSSTEAHRRAMKMVMSFLFLFIVHFFSLQVANWIFFMLWNNKYIKFVMLALNAFPSCHSFILILGNSKLRQTAVRLL.

Over 1 to 7 (MATELDK) the chain is Extracellular. The chain crosses the membrane as a helical span at residues 8–28 (IFLILAIAEFIISMLGNVFIG). The Cytoplasmic portion of the chain corresponds to 29-50 (LVNCSEGIKNQKVFSSDFILTS). The chain crosses the membrane as a helical span at residues 51-71 (LAISTIGQLLVILFDSFLVGL). Residues 72–101 (ASHLYTTYRLGKPVIMLWHMTNHLTTWLAT) are Extracellular-facing. The chain crosses the membrane as a helical span at residues 102 to 122 (CLSVFYFFKIAHFPHSLFLWL). Residues 123 to 127 (RWRMN) are Cytoplasmic-facing. A helical membrane pass occupies residues 128–148 (GMIAMLLILSLFLLIFDSSVL). The Extracellular portion of the chain corresponds to 149–187 (EIFIDISLNIIDKSSLTLYLDESKTLYDKLSILKTLLSL). A helical membrane pass occupies residues 188-208 (TSFIPFSLSLTSVLFLYLSLV). At 209–238 (RHTRNLKLSSLGSRDSSTEAHRRAMKMVMS) the chain is on the cytoplasmic side. A helical membrane pass occupies residues 239 to 259 (FLFLFIVHFFSLQVANWIFFM). Residues 260-265 (LWNNKY) lie on the Extracellular side of the membrane. Residues 266-286 (IKFVMLALNAFPSCHSFILIL) form a helical membrane-spanning segment. Residues 287–299 (GNSKLRQTAVRLL) lie on the Cytoplasmic side of the membrane.

This sequence belongs to the G-protein coupled receptor T2R family.

It localises to the membrane. Functionally, receptor that may play a role in the perception of bitterness and is gustducin-linked. May play a role in sensing the chemical composition of the gastrointestinal content. The activity of this receptor may stimulate alpha gustducin, mediate PLC-beta-2 activation and lead to the gating of TRPM5. The chain is Taste receptor type 2 member 42 (TAS2R42) from Gorilla gorilla gorilla (Western lowland gorilla).